We begin with the raw amino-acid sequence, 254 residues long: 14-3-3-like protein RA215 (254 aa).

This sequence belongs to the 14-3-3 family.

In Solanum tuberosum (Potato), this protein is 14-3-3-like protein RA215.